The sequence spans 390 residues: MQVFWFIPTHGDSRYLGTSEGARAVGFDYLRQVAVAADTLGYEGVLIPTGRSCEDPWVVASALAAVTQRLKFLVAVRPGLMAPTLAARMAATFDRISNGRLLINLVTGGDRAELEGDGLFLDHAARYEASAEFLRIWRQVLAASHDGDKVDYDGKHLSVKGATVLYPPLQRPHPPVYFGGSSAPAHALAGEQVDTYLTWGEPPAAVAQKLDDVRRHAARHGRTVKFGIRLHVIVRETDAAAWAAAEDLISRLDDDTVARAQAVFANMDSEGQRRMAALHAGGTRRTREALEISPNLWAGVGLVRGGAGTALVGDPATVAERLREYAALGIDTFVLSGYPHLEEAYRFAELVFPLLPRAVRAKFDNLPGKVLSGPFGEVMATGIVPRAAQS.

This sequence belongs to the SsuD family.

The catalysed reaction is an alkanesulfonate + FMNH2 + O2 = an aldehyde + FMN + sulfite + H2O + 2 H(+). Catalyzes the desulfonation of aliphatic sulfonates. This is Alkanesulfonate monooxygenase from Cupriavidus taiwanensis (strain DSM 17343 / BCRC 17206 / CCUG 44338 / CIP 107171 / LMG 19424 / R1) (Ralstonia taiwanensis (strain LMG 19424)).